We begin with the raw amino-acid sequence, 377 residues long: Outer membrane porin N (377 aa).

An N-terminal signal peptide occupies residues 1–21 (MKSKVLALLIPALLAAGAAHA). Polar residues predominate over residues 175-189 (NNEGASNGQEGTNNG). Residues 175–196 (NNEGASNGQEGTNNGRDVRHEN) are disordered.

It belongs to the Gram-negative porin family. In terms of assembly, homotrimer.

It localises to the cell outer membrane. In terms of biological role, forms pores that allow passive diffusion of small molecules across the outer membrane. Non-specific porin. The polypeptide is Outer membrane porin N (ompN) (Escherichia coli (strain K12)).